Here is a 1846-residue protein sequence, read N- to C-terminus: MYEGKKTKNMFLTRALEKILADKEVKKAHHSQLRKACEVALEEIKVETEKQSPPHGEAKAGSGTLPPVKSKTNFIEADKYFLPFELACQSKCPRIVSTSLDCLQKLIAYGHLTGSAPDSTTPGKKLIDRIIETICGCFQGPQTDEGVQLQIIKALLTAVTSQHIEIHEGTVLQAVRTCYNIYLASKNLINQTTAKATLTQMLNVIFARMENQALQEAKQMERERHRQQHHLLQSPVSHHEPESPHLRYLPPQTVDHIAQEQEGDLDPQTHDVDKSLQDDIEPENGSDISSAENEQTEADQATAAETLSKDDVLCDGECEEKPQDIVQSIVEEMVDIIVGDMGEGTAVSASADGNAGAVEDGSDSENVQANGIPGTPISAAYTPSLPDDRLSVSSNDTQESGNSSGPSPGAKFSHILQKDAFLVFRSLCKLSMKPLSDGPPDPKSHELRSKILSLQLLLSILQNAGPVFRTNEMFINAIKQYLCVALSKNGVSSVPEVFELSLSIFLTLLSNFKTHLKMQIEVFFKEIFLYILETSTSSFDHKWMVIQTLTRICADAQSVVDIYVNYDCDLNAANIFERLVNDLSKIAQGRGSQELGMSNVQELSLRKKGLECLVSILKCMVEWSKDQYVNPNSQTTLGQEKPSEQEISEIKHPETINRYGSLNSLESTSSSGIGSYSTQMSGTDNPEQFEVLKQQKEIIEQGIDLFNKKPKRGIQYLQEQGMLGTTPEDIAQFLHQEERLDSTQAGEFLGDNDKFNKEVMYAYVDQHDFSGKDFVSALRLFLEGFRLPGEAQKIDRLMEKFAARYLECNQGQTLFASADTAYVLAYSIIMLTTDLHSPQVKNKMTKEQYIKMNRGINDSKDLPEEYLSAIYNEIAGKKISMKETKELTIPTKSTKQNVASEKQRRLLYNLEMEQMAKTAKALMEAVSHVQAPFTSATHLEHVRPMFKLAWTPFLAAFSVGLQDCDDTDVASLCLEGIRCAIRIACIFSIQLERDAYVQALARFTLLTVSSGITEMKQKNIDTIKTLITVAHTDGNYLGNSWHEILKCISQLELAQLIGTGVKPRYISGTVRGREGSLTGTKDQAPDEFVGLGLVGGNVDWKQIASIQESIGETSSQSVVVAVDRIFTGSTRLDGNAIVDFVRWLCAVSMDELLSTTHPRMFSLQKIVEISYYNMGRIRLQWSRIWEVIGDHFNKVGCNPNEDVAIFAVDSLRQLSMKFLEKGELANFRFQKDFLRPFEHIMKRNRSPTIRDMVVRCIAQMVNSQAANIRSGWKNIFSVFHLAASDQDESIVELAFQTSGHIVTLVFEKHFPATIDSFQDAVKCLSEFACNAAFPDTSMEAIRLIRHCAKYVSDRPQAFKEYTSDDMNVAPEDRVWVRGWFPILFELSCVINRCKLDVRTRGLTVMFEIMKTYGHTYEKHWWQDLFRIVFRIFDNMKLPEQQTEKAEWMTTTCNHALYAICDVFTQYLEVLSDVLLDDIFAQLYWCVQQDNEQLARSGTNCLENVVILNGEKFTLEIWDKTCNCTLDIFKTTIPHALLTWRPTSGEAAPPSPSAMSEKQLDAISQKSVDIHDSAQPRSSDNRQQAPLVSVSPASEEVSKGRPTAKFPEQKLFAALLIKCVVQLELIQTIDNIVFFPATSKKEDAENLAAAQRDAVDFDVRVDTQDQGMYRFLTSQQLFKLLDCLLESHRFAKAFNSNNEQRTALWKAGFKGKSKPNLLKQETSSLACGLRILFRMYTDESRVSAWEEVQQRLLNVCSEALSYFLTLTSESHREAWTNLLLLFLTKVLKISDNRFKAHASFYYPLLCEIMQFDLIPELRAVLRRFFLRIGIVFQISQPPEQELGINKQ.

Positions 2 to 224 (YEGKKTKNMF…QEAKQMERER (223 aa)) are DCB; DCB:DCB domain and DCB:HUS domain interaction. Serine 52 is modified (phosphoserine). Disordered stretches follow at residues 217-248 (AKQM…HLRY), 264-302 (DLDP…DQAT), and 347-410 (VSAS…SPGA). Over residues 267–277 (PQTHDVDKSLQ) the composition is skewed to basic and acidic residues. Phosphoserine is present on residues serine 286, serine 289, serine 290, serine 394, and serine 407. Over residues 391–406 (SVSSNDTQESGNSSGP) the composition is skewed to polar residues. The segment at 554–574 (ADAQSVVDIYVNYDCDLNAAN) is HUS; DCB:HUS domain interaction. The segment at 631–684 (PNSQTTLGQEKPSEQEISEIKHPETINRYGSLNSLESTSSSGIGSYSTQMSGTD) is disordered. Positions 641 to 655 (KPSEQEISEIKHPET) are enriched in basic and acidic residues. A compositionally biased stretch (low complexity) spans 661–681 (SLNSLESTSSSGIGSYSTQMS). Residues 688 to 877 (QFEVLKQQKE…SAIYNEIAGK (190 aa)) form the SEC7 domain. The Nuclear localization signal (NLS) motif lies at 708–712 (KKPKR). Phosphoserine occurs at positions 1076, 1563, and 1566. The tract at residues 1571–1600 (DSAQPRSSDNRQQAPLVSVSPASEEVSKGR) is disordered. Positions 1574-1585 (QPRSSDNRQQAP) are enriched in polar residues.

Homodimer. Interacts with ARFGEF2/BIG2; both proteins are probably part of the same or very similar macromolecular complexes. Interacts with FKBP2. Interacts with MYO9B. Interacts with PRKAR1A and PRKAR2A. Interacts with PPP1CC. Interacts with NCL, FBL, NUP62 and U3 small nucleolar RNA. Interacts with DPY30. Interacts with PDE3A. Interacts with KANK1. Interacts with TBC1D22A and TBC1D22B. Post-translationally, phosphorylated. In vitro phosphorylated by PKA reducing its GEF activity and dephosphorylated by phosphatase PP1.

It localises to the cytoplasm. The protein resides in the perinuclear region. The protein localises to the golgi apparatus. It is found in the trans-Golgi network. Its subcellular location is the nucleus. It localises to the nucleolus. The protein resides in the nucleus matrix. The protein localises to the membrane. Its activity is regulated as follows. Inhibited by brefeldin A. In terms of biological role, promotes guanine-nucleotide exchange on ARF1 and ARF3. Promotes the activation of ARF1/ARF3 through replacement of GDP with GTP. Involved in vesicular trafficking. Required for the maintenance of Golgi structure; the function may be independent of its GEF activity. Required for the maturation of integrin beta-1 in the Golgi. Involved in the establishment and persistence of cell polarity during directed cell movement in wound healing. Proposed to act as A kinase-anchoring protein (AKAP) and may mediate crosstalk between Arf and PKA pathways. Inhibits GAP activity of MYO9B probably through competitive RhoA binding. The function in the nucleus remains to be determined. This Rattus norvegicus (Rat) protein is Brefeldin A-inhibited guanine nucleotide-exchange protein 1 (Arfgef1).